Reading from the N-terminus, the 564-residue chain is Dihydroxy-acid dehydratase (564 aa).

[2Fe-2S] cluster is bound at residue Cys55. Residue Asp87 coordinates Mg(2+). Cys128 contributes to the [2Fe-2S] cluster binding site. Positions 129 and 130 each coordinate Mg(2+). Residue Lys130 is modified to N6-carboxylysine. Cys200 is a [2Fe-2S] cluster binding site. A Mg(2+)-binding site is contributed by Glu452. Ser478 (proton acceptor) is an active-site residue.

This sequence belongs to the IlvD/Edd family. Homodimer. [2Fe-2S] cluster serves as cofactor. Mg(2+) is required as a cofactor.

It catalyses the reaction (2R)-2,3-dihydroxy-3-methylbutanoate = 3-methyl-2-oxobutanoate + H2O. The catalysed reaction is (2R,3R)-2,3-dihydroxy-3-methylpentanoate = (S)-3-methyl-2-oxopentanoate + H2O. Its pathway is amino-acid biosynthesis; L-isoleucine biosynthesis; L-isoleucine from 2-oxobutanoate: step 3/4. It functions in the pathway amino-acid biosynthesis; L-valine biosynthesis; L-valine from pyruvate: step 3/4. Functionally, functions in the biosynthesis of branched-chain amino acids. Catalyzes the dehydration of (2R,3R)-2,3-dihydroxy-3-methylpentanoate (2,3-dihydroxy-3-methylvalerate) into 2-oxo-3-methylpentanoate (2-oxo-3-methylvalerate) and of (2R)-2,3-dihydroxy-3-methylbutanoate (2,3-dihydroxyisovalerate) into 2-oxo-3-methylbutanoate (2-oxoisovalerate), the penultimate precursor to L-isoleucine and L-valine, respectively. The protein is Dihydroxy-acid dehydratase of Polaromonas sp. (strain JS666 / ATCC BAA-500).